The chain runs to 288 residues: Phosphatidylglycerol--prolipoprotein diacylglyceryl transferase (288 aa).

The next 4 membrane-spanning stretches (helical) occupy residues 8-28 (IGPIELHYYGLMYAIAFFVGI), 49-69 (AFVAIISGLIGGRLYYILFNL), 79-99 (ILAVWHGGMAIHGGILGGIAG), and 109-129 (INPLILGDFAAGPFILGQAIG). Arg130 lines the a 1,2-diacyl-sn-glycero-3-phospho-(1'-sn-glycerol) pocket. The next 3 helical transmembrane spans lie at 203–223 (PAMLYELILNLIGFFIIWFIL), 232–252 (GYMWWWYIIIYSINRIIVSFF), and 259–279 (FFNFRAPHVISIILIAVSIFF).

The protein belongs to the Lgt family.

Its subcellular location is the cell inner membrane. The catalysed reaction is L-cysteinyl-[prolipoprotein] + a 1,2-diacyl-sn-glycero-3-phospho-(1'-sn-glycerol) = an S-1,2-diacyl-sn-glyceryl-L-cysteinyl-[prolipoprotein] + sn-glycerol 1-phosphate + H(+). The protein operates within protein modification; lipoprotein biosynthesis (diacylglyceryl transfer). In terms of biological role, catalyzes the transfer of the diacylglyceryl group from phosphatidylglycerol to the sulfhydryl group of the N-terminal cysteine of a prolipoprotein, the first step in the formation of mature lipoproteins. This Fusobacterium nucleatum subsp. nucleatum (strain ATCC 25586 / DSM 15643 / BCRC 10681 / CIP 101130 / JCM 8532 / KCTC 2640 / LMG 13131 / VPI 4355) protein is Phosphatidylglycerol--prolipoprotein diacylglyceryl transferase.